A 193-amino-acid polypeptide reads, in one-letter code: Fra a 1-associated protein (193 aa).

The tract at residues Met-1 to Asp-27 is disordered.

As to quaternary structure, interacts with FRAA1E, FRAA2 and FRAA3.

The sequence is that of Fra a 1-associated protein from Fragaria ananassa (Strawberry).